A 640-amino-acid polypeptide reads, in one-letter code: Threonine--tRNA ligase (640 aa).

Residues 1 to 61 enclose the TGS domain; it reads MPIITLPDGS…DHDATLQIIT (61 aa). The catalytic stretch occupies residues 242 to 533; it reads DHRKLGKRLD…LIEHYEGAFP (292 aa). Zn(2+) is bound by residues Cys-333, His-384, and His-510.

The protein belongs to the class-II aminoacyl-tRNA synthetase family. As to quaternary structure, homodimer. It depends on Zn(2+) as a cofactor.

The protein localises to the cytoplasm. The catalysed reaction is tRNA(Thr) + L-threonine + ATP = L-threonyl-tRNA(Thr) + AMP + diphosphate + H(+). Its function is as follows. Catalyzes the attachment of threonine to tRNA(Thr) in a two-step reaction: L-threonine is first activated by ATP to form Thr-AMP and then transferred to the acceptor end of tRNA(Thr). Also edits incorrectly charged L-seryl-tRNA(Thr). The chain is Threonine--tRNA ligase from Azotobacter vinelandii (strain DJ / ATCC BAA-1303).